A 277-amino-acid chain; its full sequence is Large ribosomal subunit protein uL2 (277 aa).

A disordered region spans residues 215–277; it reads GIRPTVRGSV…KLIVKRRNDK (63 aa). The span at 264 to 277 shows a compositional bias: basic and acidic residues; sequence KYSDKLIVKRRNDK.

The protein belongs to the universal ribosomal protein uL2 family. In terms of assembly, part of the 50S ribosomal subunit. Forms a bridge to the 30S subunit in the 70S ribosome.

In terms of biological role, one of the primary rRNA binding proteins. Required for association of the 30S and 50S subunits to form the 70S ribosome, for tRNA binding and peptide bond formation. It has been suggested to have peptidyltransferase activity; this is somewhat controversial. Makes several contacts with the 16S rRNA in the 70S ribosome. This chain is Large ribosomal subunit protein uL2, found in Clostridium acetobutylicum (strain ATCC 824 / DSM 792 / JCM 1419 / IAM 19013 / LMG 5710 / NBRC 13948 / NRRL B-527 / VKM B-1787 / 2291 / W).